The primary structure comprises 66 residues: Cytochrome c oxidase subunit 26, mitochondrial (66 aa).

The N-terminal 8 residues, 1 to 8 (MFFSQVLR), are a transit peptide targeting the mitochondrion. Residues 9-27 (SSARAAPIKRYTGGRIGES) lie on the Mitochondrial matrix side of the membrane. A helical transmembrane segment spans residues 28–64 (WVITEGRRLIPEIFQWSAVLSVCLGWPGAVYFFSKAR). Residues 65–66 (KA) lie on the Mitochondrial intermembrane side of the membrane.

Belongs to the fungal cytochrome c oxidase subunit 26 family. Component of the cytochrome c oxidase (complex IV, CIV), a multisubunit enzyme composed of 12 subunits. The complex is composed of a catalytic core of 3 subunits COX1, COX2 and COX3, encoded in the mitochondrial DNA, and 9 supernumerary subunits COX4, COX5A (or COX5B), COX6, COX7, COX8, COX9, COX12, COX13 and COX26, which are encoded in the nuclear genome. The complex exists as a monomer or a dimer and forms supercomplexes (SCs) in the inner mitochondrial membrane with a dimer of ubiquinol-cytochrome c oxidoreductase (cytochrome b-c1 complex, complex III, CIII), resulting in 2 different assemblies (supercomplexes III(2)IV and III(2)IV(2)).

The protein localises to the mitochondrion inner membrane. Component of the cytochrome c oxidase, the last enzyme in the mitochondrial electron transport chain which drives oxidative phosphorylation. The respiratory chain contains 3 multisubunit complexes succinate dehydrogenase (complex II, CII), ubiquinol-cytochrome c oxidoreductase (cytochrome b-c1 complex, complex III, CIII) and cytochrome c oxidase (complex IV, CIV), that cooperate to transfer electrons derived from NADH and succinate to molecular oxygen, creating an electrochemical gradient over the inner membrane that drives transmembrane transport and the ATP synthase. Cytochrome c oxidase is the component of the respiratory chain that catalyzes the reduction of oxygen to water. Electrons originating from reduced cytochrome c in the intermembrane space (IMS) are transferred via the dinuclear copper A center (CU(A)) of COX2 and heme A of COX1 to the active site in COX1, a binuclear center (BNC) formed by heme A3 and copper B (CU(B)). The BNC reduces molecular oxygen to 2 water molecules using 4 electrons from cytochrome c in the IMS and 4 protons from the mitochondrial matrix. This Saccharomyces cerevisiae (strain ATCC 204508 / S288c) (Baker's yeast) protein is Cytochrome c oxidase subunit 26, mitochondrial (COX26).